Consider the following 99-residue polypeptide: Ferredoxin, heterocyst (99 aa).

In terms of domain architecture, 2Fe-2S ferredoxin-type spans 4–96 (YQVRLINKKQ…NCTIKTHQEP (93 aa)). Residues cysteine 42, cysteine 47, cysteine 50, and cysteine 80 each contribute to the [2Fe-2S] cluster site.

This sequence belongs to the 2Fe2S plant-type ferredoxin family. It depends on [2Fe-2S] cluster as a cofactor.

Functionally, ferredoxins are iron-sulfur proteins that transfer electrons in a wide variety of metabolic reactions. Donates electrons to the nitrogenase. The protein is Ferredoxin, heterocyst (fdxH) of Nostoc sp. (strain PCC 7120 / SAG 25.82 / UTEX 2576).